The following is a 380-amino-acid chain: Succinyl-diaminopimelate desuccinylase (380 aa).

Histidine 70 contributes to the Zn(2+) binding site. Aspartate 72 is a catalytic residue. A Zn(2+)-binding site is contributed by aspartate 103. Glutamate 137 (proton acceptor) is an active-site residue. Residues glutamate 138, glutamate 166, and histidine 352 each coordinate Zn(2+).

It belongs to the peptidase M20A family. DapE subfamily. In terms of assembly, homodimer. Zn(2+) is required as a cofactor. The cofactor is Co(2+).

The enzyme catalyses N-succinyl-(2S,6S)-2,6-diaminopimelate + H2O = (2S,6S)-2,6-diaminopimelate + succinate. The protein operates within amino-acid biosynthesis; L-lysine biosynthesis via DAP pathway; LL-2,6-diaminopimelate from (S)-tetrahydrodipicolinate (succinylase route): step 3/3. Its function is as follows. Catalyzes the hydrolysis of N-succinyl-L,L-diaminopimelic acid (SDAP), forming succinate and LL-2,6-diaminopimelate (DAP), an intermediate involved in the bacterial biosynthesis of lysine and meso-diaminopimelic acid, an essential component of bacterial cell walls. The protein is Succinyl-diaminopimelate desuccinylase of Azoarcus sp. (strain BH72).